The sequence spans 191 residues: METGDSAVKSSQDVHYYGKSTAQKHRRSNGIILIFRALTFSFSLTSVIVMGTNRHRIDAQSRVAWYDFDPFRYVLAVNAIICIYSFVEIWLAVYTYLKDTLFLPETFQVWFDYGHDQGFAYLLFSANSAGIAMAQLLQSGNSLIHGAYRCSDAGVFCTQARASIGLGFGAFLFLALSSLLTGLRVARWYFS.

At 1–29 (METGDSAVKSSQDVHYYGKSTAQKHRRSN) the chain is on the cytoplasmic side. Residues 30–50 (GIILIFRALTFSFSLTSVIVM) traverse the membrane as a helical segment. The Extracellular portion of the chain corresponds to 51 to 72 (GTNRHRIDAQSRVAWYDFDPFR). A helical transmembrane segment spans residues 73 to 93 (YVLAVNAIICIYSFVEIWLAV). Residues 94 to 116 (YTYLKDTLFLPETFQVWFDYGHD) lie on the Cytoplasmic side of the membrane. A helical transmembrane segment spans residues 117–137 (QGFAYLLFSANSAGIAMAQLL). The Extracellular segment spans residues 138–162 (QSGNSLIHGAYRCSDAGVFCTQARA). A helical membrane pass occupies residues 163-183 (SIGLGFGAFLFLALSSLLTGL). Residues 184-191 (RVARWYFS) lie on the Cytoplasmic side of the membrane.

This sequence belongs to the Casparian strip membrane proteins (CASP) family. As to quaternary structure, homodimer and heterodimers.

The protein resides in the cell membrane. This is CASP-like protein 4C3 from Physcomitrium patens (Spreading-leaved earth moss).